A 469-amino-acid chain; its full sequence is UDP-glycosyltransferase 43 (469 aa).

UDP-alpha-D-glucose is bound by residues Ser-280, 345-346, 363-371, and 385-388; these read WV, HCGWNSILE, and YSEQ.

This sequence belongs to the UDP-glycosyltransferase family.

Its activity is regulated as follows. Inhibited by Cu(2+) or Zn(2+). Glycosyltransferase that catalyzes the C-glucosylation of daidzein to puerarin. Shows activity with the isoflavones daidzein and genistein, but has no activity towards flavonoids such as 2-hydroxynaringenin. Can use UDP-glucose, but not UDP-galactose or UDP-glucuronic acid as sugar donor. Does not require bivalent cations for activity. In Pueraria montana var. lobata (Kudzu vine), this protein is UDP-glycosyltransferase 43.